The chain runs to 348 residues: Phosphoribosylformylglycinamidine cyclo-ligase (348 aa).

It belongs to the AIR synthase family.

It localises to the cytoplasm. The enzyme catalyses 2-formamido-N(1)-(5-O-phospho-beta-D-ribosyl)acetamidine + ATP = 5-amino-1-(5-phospho-beta-D-ribosyl)imidazole + ADP + phosphate + H(+). Its pathway is purine metabolism; IMP biosynthesis via de novo pathway; 5-amino-1-(5-phospho-D-ribosyl)imidazole from N(2)-formyl-N(1)-(5-phospho-D-ribosyl)glycinamide: step 2/2. The protein is Phosphoribosylformylglycinamidine cyclo-ligase of Geobacter metallireducens (strain ATCC 53774 / DSM 7210 / GS-15).